The chain runs to 192 residues: Thymidine kinase (192 aa).

ATP-binding positions include 9-16 and 87-90; these read SSMNAGKS and DEAQ. Residue glutamate 88 is the Proton acceptor of the active site. Cysteine 145, cysteine 147, cysteine 182, and histidine 185 together coordinate Zn(2+).

It belongs to the thymidine kinase family. As to quaternary structure, homotetramer.

Its subcellular location is the cytoplasm. The enzyme catalyses thymidine + ATP = dTMP + ADP + H(+). The sequence is that of Thymidine kinase from Colwellia psychrerythraea (strain 34H / ATCC BAA-681) (Vibrio psychroerythus).